The chain runs to 105 residues: Putative membrane protein insertion efficiency factor (105 aa).

The segment at 76–105 is disordered; the sequence is GHPGGVDPVPPGPHETPRKTSTHDDEPPSR. The segment covering 90-105 has biased composition (basic and acidic residues); the sequence is ETPRKTSTHDDEPPSR.

It belongs to the UPF0161 family.

The protein resides in the cell inner membrane. In terms of biological role, could be involved in insertion of integral membrane proteins into the membrane. This is Putative membrane protein insertion efficiency factor from Chromohalobacter salexigens (strain ATCC BAA-138 / DSM 3043 / CIP 106854 / NCIMB 13768 / 1H11).